Here is a 181-residue protein sequence, read N- to C-terminus: Large ribosomal subunit protein uL5 (181 aa).

It belongs to the universal ribosomal protein uL5 family. Part of the 50S ribosomal subunit; part of the 5S rRNA/L5/L18/L25 subcomplex. Contacts the 5S rRNA and the P site tRNA. Forms a bridge to the 30S subunit in the 70S ribosome.

This is one of the proteins that bind and probably mediate the attachment of the 5S RNA into the large ribosomal subunit, where it forms part of the central protuberance. In the 70S ribosome it contacts protein S13 of the 30S subunit (bridge B1b), connecting the 2 subunits; this bridge is implicated in subunit movement. Contacts the P site tRNA; the 5S rRNA and some of its associated proteins might help stabilize positioning of ribosome-bound tRNAs. In Helicobacter pylori (strain ATCC 700392 / 26695) (Campylobacter pylori), this protein is Large ribosomal subunit protein uL5.